Consider the following 381-residue polypeptide: Sulfofructose kinase (381 aa).

ATP is bound by residues G10, 72-73 (RY), and 100-103 (GNGT). N101 contacts Mg(2+). D131 serves as the catalytic Proton acceptor.

Belongs to the phosphofructokinase type A (PFKA) family. It depends on Mg(2+) as a cofactor.

The enzyme catalyses 6-deoxy-6-sulfo-D-fructose + ATP = 6-deoxy-6-sulfo-D-fructose 1-phosphate + ADP + H(+). Functionally, part of the sulfo-EMP2 pathway, a D-sulfoquinovose degradation pathway that produces sulfolactate (SL). Phosphorylates 6-deoxy-6-sulfo-D-fructose (SF) to 6-deoxy-6-sulfo-D-fructose 1-phosphate (SFP). The protein is Sulfofructose kinase of Alkalicoccus urumqiensis (Bacillus urumqiensis).